A 111-amino-acid chain; its full sequence is Large ribosomal subunit protein P1 (111 aa).

Over residues 65-89 (SGAGSGPAPAAAAAAPAAGGAAPAA) the composition is skewed to low complexity. A disordered region spans residues 65 to 111 (SGAGSGPAPAAAAAAPAAGGAAPAAETKKKEEPKEESDDDMGFGLFD).

Belongs to the eukaryotic ribosomal protein P1/P2 family. In terms of assembly, P1 and P2 exist as dimers at the large ribosomal subunit.

Its function is as follows. Plays an important role in the elongation step of protein synthesis. The polypeptide is Large ribosomal subunit protein P1 (Caenorhabditis elegans).